The following is a 361-amino-acid chain: POU domain, class 3, transcription factor 4-A (361 aa).

Disordered regions lie at residues 100–131 (HVNH…GQPI), 150–189 (LTPP…EETP), and 333–361 (EKRM…CNEL). Residues 119-131 (AHNSSLTSSGQPI) are compositionally biased toward polar residues. Over residues 165 to 183 (VLREPNDHVDLGSHHCQDH) the composition is skewed to basic and acidic residues. The region spanning 186-260 (EETPTSDELE…LLNKWLEEAD (75 aa)) is the POU-specific domain. Residues 278–337 (KRKKRTSIEVSVKGVLETHFLKCPKPAALEITSLADSLQLEKEVVRVWFCNRRQKEKRMT) constitute a DNA-binding region (homeobox).

Belongs to the POU transcription factor family. Class-3 subfamily. From embryonic stage 10, expressed in the Spemann's organizer. During gastrulation, expressed in both the involuting mesoderm and the overlying neuroectoderm. During the neural plate and neural fold stages, expressed in the entire neuroectoderm with expression in discrete regions of the developing nervous system persisting at later stages. Transiently expressed in the pronephros from stages 24-32. In adults, expressed in the kidney and brain.

It is found in the nucleus. Its function is as follows. Transcriptional activator. Induces neural-specific gene expression to act as a key regulator of neural differentiation. This is POU domain, class 3, transcription factor 4-A (pou3f4-a) from Xenopus laevis (African clawed frog).